We begin with the raw amino-acid sequence, 61 residues long: Large ribosomal subunit protein uL30 (61 aa).

This sequence belongs to the universal ribosomal protein uL30 family. As to quaternary structure, part of the 50S ribosomal subunit.

The polypeptide is Large ribosomal subunit protein uL30 (Teredinibacter turnerae (strain ATCC 39867 / T7901)).